The sequence spans 124 residues: Apolipoprotein C-IV (124 aa).

An N-terminal signal peptide occupies residues 1–27 (MSLLRCRPRDLPSVSLSVLFLVSFVAS). An N-linked (GlcNAc...) asparagine glycan is attached at N107.

Belongs to the apolipoprotein C4 family. In terms of tissue distribution, expressed by the liver and secreted in plasma.

It localises to the secreted. May participate in lipoprotein metabolism. In Mus musculus (Mouse), this protein is Apolipoprotein C-IV (Apoc4).